A 122-amino-acid chain; its full sequence is Large ribosomal subunit protein uL14 (122 aa).

Belongs to the universal ribosomal protein uL14 family. As to quaternary structure, part of the 50S ribosomal subunit. Forms a cluster with proteins L3 and L19. In the 70S ribosome, L14 and L19 interact and together make contacts with the 16S rRNA in bridges B5 and B8.

Binds to 23S rRNA. Forms part of two intersubunit bridges in the 70S ribosome. The sequence is that of Large ribosomal subunit protein uL14 from Thermotoga maritima (strain ATCC 43589 / DSM 3109 / JCM 10099 / NBRC 100826 / MSB8).